The sequence spans 142 residues: Hemoglobin subunit alpha-A (142 aa).

Positions 2–142 constitute a Globin domain; the sequence is VLSANDKTNV…VGNVLTAKYR (141 aa). Histidine 59 is a binding site for O2. Histidine 88 is a binding site for heme b.

The protein belongs to the globin family. As to quaternary structure, heterotetramer of two alpha chains and two beta chains. Red blood cells.

Functionally, involved in oxygen transport from the lung to the various peripheral tissues. The polypeptide is Hemoglobin subunit alpha-A (HBAA) (Aegypius monachus (Cinereous vulture)).